Reading from the N-terminus, the 299-residue chain is DNA-binding transcriptional activator HetR (299 aa).

The active site involves Ser-152.

Belongs to the peptidase S48 family. As to quaternary structure, homodimer; disulfide-linked.

Functionally, might be involved in temporal and/or spatial regulation of nitrogen fixation. Dimerization is required for DNA-binding. Has both a protease and a DNA-binding activity. In Leptolyngbya boryana (Plectonema boryanum), this protein is DNA-binding transcriptional activator HetR.